A 280-amino-acid chain; its full sequence is Protein HEAT-INDUCED TAS1 TARGET 4 (280 aa).

It belongs to the heat induced plant HTT protein family. In terms of tissue distribution, expressed in seedlings, leaves, stems, inflorescences and siliques.

It is found in the cytoplasm. The protein resides in the nucleus. Its function is as follows. Mediates both basal and acquired thermotolerance. The chain is Protein HEAT-INDUCED TAS1 TARGET 4 from Arabidopsis thaliana (Mouse-ear cress).